The sequence spans 240 residues: HTH-type transcriptional repressor STM4068 (240 aa).

Residues 9-77 (TPLYKQLFFI…RGSGSVVCSV (69 aa)) enclose the HTH gntR-type domain. The H-T-H motif DNA-binding region spans 37-56 (QKEIARSYNVSLIVVKQAWS).

Functionally, represses the expression of the STM4065-STM4067 operon. The protein is HTH-type transcriptional repressor STM4068 of Salmonella typhimurium (strain LT2 / SGSC1412 / ATCC 700720).